The sequence spans 63 residues: Large ribosomal subunit protein uL29 (63 aa).

It belongs to the universal ribosomal protein uL29 family.

The sequence is that of Large ribosomal subunit protein uL29 from Flavobacterium psychrophilum (strain ATCC 49511 / DSM 21280 / CIP 103535 / JIP02/86).